The chain runs to 437 residues: UDP-N-acetylmuramate--L-alanine ligase (437 aa).

Position 108–114 (108–114 (GAHGKTS)) interacts with ATP.

It belongs to the MurCDEF family.

It localises to the cytoplasm. It carries out the reaction UDP-N-acetyl-alpha-D-muramate + L-alanine + ATP = UDP-N-acetyl-alpha-D-muramoyl-L-alanine + ADP + phosphate + H(+). The protein operates within cell wall biogenesis; peptidoglycan biosynthesis. In terms of biological role, cell wall formation. This is UDP-N-acetylmuramate--L-alanine ligase from Staphylococcus aureus (strain COL).